The following is a 226-amino-acid chain: Charged multivesicular body protein 4 (226 aa).

Residues 22–88 (IQKLRETENM…DGTLSTIEMQ (67 aa)) adopt a coiled-coil conformation. The tract at residues 169 to 226 (QENFDKEIIGIPEPTPTLPEAPTEDLPEKAKEKKKATTTTAVEDDDDPDMKQLLSWSN) is disordered.

It belongs to the SNF7 family. In terms of assembly, homopolymer; forms elongated striated filaments of uniform ~10nm width. Monomers interact in a staggered arrangement mediated by complementary charged electrostatic surfaces. Interacts with l(2)gd1 (via DM14 domains 1 and 3); the interaction is direct and blocks access to the surface involved in homopolymerization. This interaction may be required for the ESCRT-III complex role in multivesicular body formation. Expressed at considerably higher levels in testis than in ovary. Expressed in midgut, eye, mouthparts and male accessory gland.

The protein resides in the endosome. Its subcellular location is the multivesicular body. The protein localises to the midbody. With respect to regulation, may be regulated by aurB/Aurora kinase B-dependent phosphorylation. Its function is as follows. Probable core polymerisation component of the endosomal sorting required for transport (ESCRT) III complex involved in multiple cellular processes requiring the outward bending of membranes, including vesicle budding, membrane repair and cytokinesis. The ESCRT pathway involves 4 complexes (ESCRT-0, -I, -II and -III) that sequentially assemble on the cytoplasmic side of membranes and induce membrane remodeling, budding and scission. As part of the ESCRT-III complex, involved in the budding of intraluminal vesicles (ILVs) into endosomes to form multivesicular bodies (MVBs), which target their contents for degradation via the endolysosomal pathway. Involved in regulation of signal transduction pathways, including the Notch and BMP/decapentaplegic (dpp) pathways, by sequestering the intracellular domains of activated receptors into ILVs, isolating them from the cytoplasm and targeting them for lysosomal degradation. Involved in targeting ubiquitilated proteins, such as mono-ubiquitilanated N/Notch, to MVBs for degradation. Plays a role in wing development by regulating Notch signaling. Involved in abscission of germline cells during oogenesis. Involved in spermiogenesis. Required for efficient cytoplasmic isolation and abscission during cytokinesis of epithelial sensory organ precursor cells. May be involved in septate junction remodeling and maintenance. This chain is Charged multivesicular body protein 4, found in Drosophila melanogaster (Fruit fly).